The chain runs to 53 residues: Conotoxin Cal22e (53 aa).

Positions 1-5 are excised as a propeptide; the sequence is GRPSA.

Contains 4 disulfide bonds. In terms of tissue distribution, expressed by the venom duct.

The protein resides in the secreted. Its function is as follows. Probable neurotoxin with unknown target. Possibly targets ion channels. The sequence is that of Conotoxin Cal22e from Californiconus californicus (California cone).